The following is a 377-amino-acid chain: Alanine racemase (377 aa).

The active-site Proton acceptor; specific for D-alanine is the Lys39. Residue Lys39 is modified to N6-(pyridoxal phosphate)lysine. Arg137 is a substrate binding site. The Proton acceptor; specific for L-alanine role is filled by Tyr266. A substrate-binding site is contributed by Met314.

It belongs to the alanine racemase family. The cofactor is pyridoxal 5'-phosphate.

It catalyses the reaction L-alanine = D-alanine. It participates in amino-acid biosynthesis; D-alanine biosynthesis; D-alanine from L-alanine: step 1/1. Catalyzes the interconversion of L-alanine and D-alanine. May also act on other amino acids. The chain is Alanine racemase (alr) from Symbiobacterium thermophilum (strain DSM 24528 / JCM 14929 / IAM 14863 / T).